A 357-amino-acid polypeptide reads, in one-letter code: Glycerol-3-phosphate dehydrogenase [NAD(P)+] (357 aa).

NADPH is bound by residues Ser-30, Phe-31, Arg-51, and Lys-124. Sn-glycerol 3-phosphate-binding residues include Lys-124 and Gly-152. Ala-156 is an NADPH binding site. Residues Lys-207, Asp-260, Ser-270, Arg-271, and Asn-272 each coordinate sn-glycerol 3-phosphate. Lys-207 acts as the Proton acceptor in catalysis. Residue Arg-271 coordinates NADPH. Residue Glu-297 coordinates NADPH.

Belongs to the NAD-dependent glycerol-3-phosphate dehydrogenase family.

The protein localises to the cytoplasm. It carries out the reaction sn-glycerol 3-phosphate + NAD(+) = dihydroxyacetone phosphate + NADH + H(+). It catalyses the reaction sn-glycerol 3-phosphate + NADP(+) = dihydroxyacetone phosphate + NADPH + H(+). It functions in the pathway membrane lipid metabolism; glycerophospholipid metabolism. Catalyzes the reduction of the glycolytic intermediate dihydroxyacetone phosphate (DHAP) to sn-glycerol 3-phosphate (G3P), the key precursor for phospholipid synthesis. The polypeptide is Glycerol-3-phosphate dehydrogenase [NAD(P)+] (Acinetobacter baumannii (strain AB307-0294)).